The following is a 157-amino-acid chain: Ribosomal RNA large subunit methyltransferase H (157 aa).

S-adenosyl-L-methionine contacts are provided by residues Leu-73, Gly-105, and 124–129 (MSKMTF).

The protein belongs to the RNA methyltransferase RlmH family. Homodimer.

Its subcellular location is the cytoplasm. It carries out the reaction pseudouridine(1915) in 23S rRNA + S-adenosyl-L-methionine = N(3)-methylpseudouridine(1915) in 23S rRNA + S-adenosyl-L-homocysteine + H(+). In terms of biological role, specifically methylates the pseudouridine at position 1915 (m3Psi1915) in 23S rRNA. The chain is Ribosomal RNA large subunit methyltransferase H from Bacteroides fragilis (strain ATCC 25285 / DSM 2151 / CCUG 4856 / JCM 11019 / LMG 10263 / NCTC 9343 / Onslow / VPI 2553 / EN-2).